A 529-amino-acid chain; its full sequence is Glucocorticoid modulatory element-binding protein 2 (529 aa).

Residues 80–162 (EEGENLEAEI…RKIMDSGELD (83 aa)) enclose the SAND domain. C109 contributes to the Zn(2+) binding site. Residues K135, K139, K142, and R153 each coordinate DNA. A Glycyl lysine isopeptide (Lys-Gly) (interchain with G-Cter in SUMO1); alternate cross-link involves residue K154. K154 participates in a covalent cross-link: Glycyl lysine isopeptide (Lys-Gly) (interchain with G-Cter in SUMO2); alternate. Residues H166, C170, and C174 each contribute to the Zn(2+) site. Residues 244–347 (LLDEVIQEFQ…HLSNVLMTLT (104 aa)) adopt a coiled-coil conformation. S372 is subject to Phosphoserine.

In terms of assembly, homodimer, and heterodimer of GMEB1 and GMEB2. Interacts with the glucocorticoid receptor (NR3C1). May interact with CREB-binding protein (CBP).

The protein localises to the nucleus. It localises to the cytoplasm. Its function is as follows. Trans-acting factor that binds to glucocorticoid modulatory elements (GME) present in the TAT (tyrosine aminotransferase) promoter and increases sensitivity to low concentrations of glucocorticoids. Also binds to the transferrin receptor promoter. The chain is Glucocorticoid modulatory element-binding protein 2 (Gmeb2) from Rattus norvegicus (Rat).